The following is an 88-amino-acid chain: Small ribosomal subunit protein uS15 (88 aa).

Belongs to the universal ribosomal protein uS15 family. In terms of assembly, part of the 30S ribosomal subunit. Forms a bridge to the 50S subunit in the 70S ribosome, contacting the 23S rRNA.

Its function is as follows. One of the primary rRNA binding proteins, it binds directly to 16S rRNA where it helps nucleate assembly of the platform of the 30S subunit by binding and bridging several RNA helices of the 16S rRNA. In terms of biological role, forms an intersubunit bridge (bridge B4) with the 23S rRNA of the 50S subunit in the ribosome. This Mycoplasmopsis agalactiae (strain NCTC 10123 / CIP 59.7 / PG2) (Mycoplasma agalactiae) protein is Small ribosomal subunit protein uS15.